The primary structure comprises 464 residues: Galactose-proton symporter (464 aa).

The Cytoplasmic portion of the chain corresponds to 1 to 15 (MPDAKKQGRSNKAMT). The chain crosses the membrane as a helical span at residues 16-36 (FFVCFLAALAGLLFGLDIGVI). The Periplasmic segment spans residues 37–56 (AGALPFIADEFQITSHTQEW). A helical membrane pass occupies residues 57-77 (VVSSMMFGAAVGAVGSGWLSF). The Cytoplasmic segment spans residues 78–84 (KLGRKKS). Residues 85-105 (LMIGAILFVAGSLFSAAAPNV) form a helical membrane-spanning segment. The Periplasmic segment spans residues 106 to 112 (EVLILSR). The chain crosses the membrane as a helical span at residues 113-133 (VLLGLAVGVASYTAPLYLSEI). Residues 134-139 (APEKIR) lie on the Cytoplasmic side of the membrane. Residues 140 to 160 (GSMISMYQLMITIGILGAYLS) form a helical membrane-spanning segment. Residues 161-171 (DTAFSYTGAWR) lie on the Periplasmic side of the membrane. A helical membrane pass occupies residues 172 to 192 (WMLGVIIIPAILLLIGVFFLP). At 193 to 250 (DSPRWFAAKRRFVDAERVLLRLRDTSAEAKRELDEIRESLQVKQSGWALFKENSNFRR) the chain is on the cytoplasmic side. The helical transmembrane segment at 251-271 (AVFLGVLLQVMQQFTGMNVIM) threads the bilayer. The Periplasmic portion of the chain corresponds to 272–290 (YYAPKIFELAGYTNTTEQM). Residues 291–311 (WGTVIVGLTNVLATFIAIGLV) form a helical membrane-spanning segment. At 312–321 (DRWGRKPTLT) the chain is on the cytoplasmic side. The chain crosses the membrane as a helical span at residues 322-342 (LGFLVMAAGMGVLGTMMHIGI). At 343–351 (HSPSAQYFA) the chain is on the periplasmic side. The helical transmembrane segment at 352–372 (IAMLLMFIVGFAMSAGPLIWV) threads the bilayer. Residues 373–394 (LCSEIQPLKGRDFGITCSTATN) are Cytoplasmic-facing. A helical membrane pass occupies residues 395–415 (WIANMIVGATFLTMLNTLGNA). Asn-416 is a topological domain (periplasmic). The helical transmembrane segment at 417–437 (TFWVYAALNVLFILLTLWLVP) threads the bilayer. Over 438–464 (ETKHVSLEHIERNLMKGRKLREIGAHD) the chain is Cytoplasmic.

This sequence belongs to the major facilitator superfamily. Sugar transporter (TC 2.A.1.1) family.

It is found in the cell inner membrane. Its function is as follows. Uptake of galactose across the boundary membrane with the concomitant transport of protons into the cell (symport system). The sequence is that of Galactose-proton symporter (galP) from Escherichia coli O6:H1 (strain CFT073 / ATCC 700928 / UPEC).